A 376-amino-acid chain; its full sequence is MYSAISEKISETITLQRQTSSRYIEFFVFRNVDINELWTTDISEDKTHDVWPAVNKKSFKKFLENELTSYQRPIPLLGIPQNGTVSKTCKKEKQRETDCVNYERKHGNPVTFYPRHRAKRNANTDTCISEEPSILVSHHRNSKMDVFMDTNKITLVNRELIWVPHDQVRIVKLDISLYIPDGFFGVITGHSNDVFCECVTEIITDETDISVFLMNLSEHSLMLLPGDVEFSINFLPCYIPEPWEMINLSPPEFAIFHLKASREFIAKPNSYTIQYFDAMYVCADELKALMIPSKEIAKLGLLIETYIWNKDTIPSIKIFNSTRKTIYIPTGICIARIIFTCGHFCLSLMPERAINRLQVLDANSSFLFHYATSNNA.

The protein belongs to the dUTPase family. The cofactor is Mg(2+).

The enzyme catalyses dUTP + H2O = dUMP + diphosphate + H(+). Functionally, involved in nucleotide metabolism: produces dUMP, the immediate precursor of thymidine nucleotides and decreases the intracellular concentration of dUTP to avoid uracil incorporation into viral DNA. The protein is Deoxyuridine 5'-triphosphate nucleotidohydrolase of Human herpesvirus 6A (strain GS) (HHV-6 variant A).